The following is a 167-amino-acid chain: NADH-quinone oxidoreductase subunit I (167 aa).

4Fe-4S ferredoxin-type domains follow at residues 59–88 and 98–127; these read RKYK…IEAQ and VRYD…EGPN. The [4Fe-4S] cluster site is built by C68, C71, C74, C78, C107, C110, C113, and C117.

Belongs to the complex I 23 kDa subunit family. In terms of assembly, NDH-1 is composed of 14 different subunits. Subunits NuoA, H, J, K, L, M, N constitute the membrane sector of the complex. [4Fe-4S] cluster serves as cofactor.

The protein localises to the cell inner membrane. It catalyses the reaction a quinone + NADH + 5 H(+)(in) = a quinol + NAD(+) + 4 H(+)(out). In terms of biological role, NDH-1 shuttles electrons from NADH, via FMN and iron-sulfur (Fe-S) centers, to quinones in the respiratory chain. The immediate electron acceptor for the enzyme in this species is believed to be ubiquinone. Couples the redox reaction to proton translocation (for every two electrons transferred, four hydrogen ions are translocated across the cytoplasmic membrane), and thus conserves the redox energy in a proton gradient. The protein is NADH-quinone oxidoreductase subunit I of Ehrlichia canis (strain Jake).